The primary structure comprises 213 residues: CASP-like protein UU2 (213 aa).

The tract at residues 1–26 (MEDPKGAWQSDVFDNGRDFKPHDKAP) is disordered. Residues 1–53 (MEDPKGAWQSDVFDNGRDFKPHDKAPANVTAGTTPPMYNVGAGGSEGNSKALS) lie on the Cytoplasmic side of the membrane. Over residues 14–25 (DNGRDFKPHDKA) the composition is skewed to basic and acidic residues. A helical transmembrane segment spans residues 54–74 (IISIVLRCLSIMFNVVSLGVI). Residues 75–96 (ASNQGKSYFVVWRTLNSSNMQY) are Extracellular-facing. N90 carries an N-linked (GlcNAc...) asparagine glycan. Residues 97–117 (LFAINVIVLVYCVVQLILSII) form a helical membrane-spanning segment. Over 118–137 (NLVQGKMVLSGPTQPASTIT) the chain is Cytoplasmic. A helical membrane pass occupies residues 138–158 (YICDQGLTYMLMAGFGAGVAL). Residues 159–184 (QASVDKGESGMLDCSGANEFCGKNKA) are Extracellular-facing. The helical transmembrane segment at 185–205 (SAALSFLGFVCIALSANLNYL) threads the bilayer. The Cytoplasmic portion of the chain corresponds to 206 to 213 (RLYFMAAK).

It belongs to the Casparian strip membrane proteins (CASP) family. Homodimer and heterodimers.

The protein resides in the cell membrane. This Physcomitrium patens (Spreading-leaved earth moss) protein is CASP-like protein UU2.